Here is a 275-residue protein sequence, read N- to C-terminus: Axoneme-associated protein mst101(3) (275 aa).

12 tandem repeats follow at residues 64–79 (KKKCAEAAKKEKEAAE), 80–95 (KKKCAEAAKKEKEAAE), 96–111 (KKKCAEAAKKEQEAAQ), 112–127 (KKKCAELAKKEKEAAE), 128–143 (KKKCAEAAKKEKEAAE), 144–159 (RKKCEEAAFKQKCEEA), 160–175 (AKKKKEAKKAAELQQK), 181–196 (KKEKEAEMMKKCEEAA), 197–212 (KKKAAEEAAKKKAEEV), 215–230 (KKKADEAAAKKKCAEA), 231–246 (KKKAEEAALKKMCEEA), and 249–264 (KKMCEEAALQKKCAEA). A 12 X 16 AA tandem repeats of [KRA]-K-[KEM]-[CKA]-[AEKD]-[EA]-[ALE]-[AMK]-[FKAML]-[KQA]-[EQKA]-[KQCEM]-[ECLA]-[AEQ]-[AEQ]-[EQAKV] region spans residues 64–264 (KKKCAEAAKK…AALQKKCAEA (201 aa)).

Testis.

The protein resides in the cytoplasm. Possible structural role in the sperm tail. In Drosophila hydei (Fruit fly), this protein is Axoneme-associated protein mst101(3) (mst101(3)).